The primary structure comprises 303 residues: Glycine--tRNA ligase alpha subunit (303 aa).

The protein belongs to the class-II aminoacyl-tRNA synthetase family. Tetramer of two alpha and two beta subunits.

It localises to the cytoplasm. The enzyme catalyses tRNA(Gly) + glycine + ATP = glycyl-tRNA(Gly) + AMP + diphosphate. The protein is Glycine--tRNA ligase alpha subunit (glyQ) of Helicobacter pylori (strain ATCC 700392 / 26695) (Campylobacter pylori).